A 705-amino-acid chain; its full sequence is 3-hydroxypropionate--CoA ligase [ADP-forming] (705 aa).

Residues 25-61 form the ATP-grasp domain; the sequence is KSILKNYGVKVPPYALVTSAEEAAKEAKKIGFPLVMK. 51 to 61 is a binding site for ATP; sequence AKKIGFPLVMK.

This sequence in the N-terminal section; belongs to the acetate CoA ligase beta subunit family. The protein in the C-terminal section; belongs to the acetate CoA ligase alpha subunit family. Requires Mg(2+) as cofactor. The cofactor is Mn(2+).

It catalyses the reaction 3-hydroxypropanoate + ATP + CoA = 3-hydroxypropanoyl-CoA + ADP + phosphate. In terms of biological role, involved in thaumarchaeal hydroxypropionate/hydroxybutyrate (HP/HB) cycle, a modified version of the autotrophic HP/HB cycle of Crenarchaeota. Catalyzes the formation of 3-hydroxypropionyl-CoA, ADP and phosphate from 3-hydroxypropionate, coenzyme A (CoA) and ATP. Can also use 4-hydroxybutyrate, propionate and butyrate, with poor catalytic efficiency. The polypeptide is 3-hydroxypropionate--CoA ligase [ADP-forming] (Nitrosopumilus maritimus (strain SCM1)).